Consider the following 128-residue polypeptide: uncharacterized protein (128 aa).

Residues 24–43 (KRTQNNTEQASRAINSPLQS) form a disordered region. The span at 26–43 (TQNNTEQASRAINSPLQS) shows a compositional bias: polar residues.

This is an uncharacterized protein from Homo sapiens (Human).